Consider the following 643-residue polypeptide: Tigger transposable element-derived protein 5 (643 aa).

The interval 1–50 is disordered; the sequence is MYSAGPPAVPAPRRCRRPPPGRPMQPPRPPAPAPVPAARPPPPAPGPRPR. Positions 20-48 are enriched in pro residues; sequence PGRPMQPPRPPAPAPVPAARPPPPAPGPR. The HTH psq-type domain maps to 52–103; it reads AVKMAFRKAYSIKDKLQAIERVKGGERQASVCRDFGVPGGTLRGWLKDEPKL. 2 consecutive DNA-binding regions (H-T-H motif) follow at residues 79–99 and 150–183; these read QASV…WLKD and PLIQ…WQKR. The region spanning 117-190 is the HTH CENPB-type domain; the sequence is QRKKMRLANE…QKRHGISSQR (74 aa). The disordered stretch occupies residues 197–236; sequence PVAAGPAPGPPVKQEPAQPTRAGPLPDRAASTPAPAEGGY. The DDE-1 domain maps to 238–358; that stretch reads DEQIYNANVT…LQQKAVLLVA (121 aa). The tract at residues 366-395 is disordered; the sequence is EARMPALEESEETRRRCRPEPTGPPEELQT.

The protein belongs to the tigger transposable element derived protein family.

Its subcellular location is the nucleus. This Bos taurus (Bovine) protein is Tigger transposable element-derived protein 5 (TIGD5).